The chain runs to 212 residues: Fibrillarin-like rRNA/tRNA 2'-O-methyltransferase (212 aa).

Residues 73 to 74 (TT), 91 to 92 (EI), 116 to 117 (DA), and 136 to 139 (DVAQ) contribute to the S-adenosyl-L-methionine site.

It belongs to the methyltransferase superfamily. Fibrillarin family. As to quaternary structure, interacts with nop5. Component of box C/D small ribonucleoprotein (sRNP) particles that contain rpl7ae, FlpA and nop5, plus a guide RNA.

Functionally, involved in pre-rRNA and tRNA processing. Utilizes the methyl donor S-adenosyl-L-methionine to catalyze the site-specific 2'-hydroxyl methylation of ribose moieties in rRNA and tRNA. Site specificity is provided by a guide RNA that base pairs with the substrate. Methylation occurs at a characteristic distance from the sequence involved in base pairing with the guide RNA. The chain is Fibrillarin-like rRNA/tRNA 2'-O-methyltransferase from Methanothrix thermoacetophila (strain DSM 6194 / JCM 14653 / NBRC 101360 / PT) (Methanosaeta thermophila).